The following is a 103-amino-acid chain: UPF0145 protein Rsph17025_2361 (103 aa).

This sequence belongs to the UPF0145 family.

The chain is UPF0145 protein Rsph17025_2361 from Cereibacter sphaeroides (strain ATCC 17025 / ATH 2.4.3) (Rhodobacter sphaeroides).